The sequence spans 128 residues: Small ribosomal subunit protein uS11 (128 aa).

This sequence belongs to the universal ribosomal protein uS11 family. As to quaternary structure, part of the 30S ribosomal subunit. Interacts with proteins S7 and S18. Binds to IF-3.

Functionally, located on the platform of the 30S subunit, it bridges several disparate RNA helices of the 16S rRNA. Forms part of the Shine-Dalgarno cleft in the 70S ribosome. In Methylococcus capsulatus (strain ATCC 33009 / NCIMB 11132 / Bath), this protein is Small ribosomal subunit protein uS11.